The following is a 325-amino-acid chain: Phosphatidylglycerol--prolipoprotein diacylglyceryl transferase (325 aa).

The next 4 membrane-spanning stretches (helical) occupy residues 19-39, 47-67, 93-113, and 119-139; these read IPLR…VWFG, GGKA…GLVG, IWEG…GAWI, and GIPL…AQAI. Arginine 141 is an a 1,2-diacyl-sn-glycero-3-phospho-(1'-sn-glycerol) binding site. Transmembrane regions (helical) follow at residues 175–195, 207–225, and 237–257; these read HPTF…VIWA, FALY…EYMR, and LNVW…VISA. Basic and acidic residues predominate over residues 266–312; that stretch reads IVEPDRDATPAEKDGSGEDGSGEKGVAKADAAAKDPLTKDEPGKDAT. A disordered region spans residues 266 to 325; the sequence is IVEPDRDATPAEKDGSGEDGSGEKGVAKADAAAKDPLTKDEPGKDATAENAGAAGAAEKA. Low complexity predominate over residues 313 to 325; sequence AENAGAAGAAEKA.

It belongs to the Lgt family.

It is found in the cell membrane. It carries out the reaction L-cysteinyl-[prolipoprotein] + a 1,2-diacyl-sn-glycero-3-phospho-(1'-sn-glycerol) = an S-1,2-diacyl-sn-glyceryl-L-cysteinyl-[prolipoprotein] + sn-glycerol 1-phosphate + H(+). Its pathway is protein modification; lipoprotein biosynthesis (diacylglyceryl transfer). Catalyzes the transfer of the diacylglyceryl group from phosphatidylglycerol to the sulfhydryl group of the N-terminal cysteine of a prolipoprotein, the first step in the formation of mature lipoproteins. The protein is Phosphatidylglycerol--prolipoprotein diacylglyceryl transferase of Streptomyces griseus subsp. griseus (strain JCM 4626 / CBS 651.72 / NBRC 13350 / KCC S-0626 / ISP 5235).